A 210-amino-acid chain; its full sequence is Two-component response regulator ORR7 (210 aa).

Residues valine 53–tyrosine 92 form a disordered region. Over residues serine 61–alanine 88 the composition is skewed to acidic residues. The region spanning tyrosine 92–threonine 205 is the Response regulatory domain. The residue at position 142 (aspartate 142) is a 4-aspartylphosphate.

The protein belongs to the ARR family. Type-A subfamily. Two-component system major event consists of a His-to-Asp phosphorelay between a sensor histidine kinase (HK) and a response regulator (RR). In plants, the His-to-Asp phosphorelay involves an additional intermediate named Histidine-containing phosphotransfer protein (HPt). This multistep phosphorelay consists of a His-Asp-His-Asp sequential transfer of a phosphate group between first a His and an Asp of the HK protein, followed by the transfer to a conserved His of the HPt protein and finally the transfer to an Asp in the receiver domain of the RR protein.

In terms of biological role, functions as a response regulator involved in His-to-Asp phosphorelay signal transduction system. Phosphorylation of the Asp residue in the receiver domain activates the ability of the protein to promote the transcription of target genes. Type-A response regulators seem to act as negative regulators of the cytokinin signaling. This Oryza sativa subsp. japonica (Rice) protein is Two-component response regulator ORR7.